A 206-amino-acid polypeptide reads, in one-letter code: Lipid A acyltransferase PagP (206 aa).

The first 22 residues, 1-22 (MKQMVCWLTAGLLTLGGLPARA), serve as a signal peptide directing secretion. The segment covering 26–46 (VPAVPETPAAPAAPAVQETPA) has biased composition (low complexity). The disordered stretch occupies residues 26–50 (VPAVPETPAAPAAPAVQETPASSAA). Catalysis depends on residues histidine 80, aspartate 123, and serine 124.

It belongs to the lipid A palmitoyltransferase family. Homodimer.

It is found in the cell outer membrane. The catalysed reaction is a lipid A + a 1,2-diacyl-sn-glycero-3-phosphocholine = a hepta-acyl lipid A + a 2-acyl-sn-glycero-3-phosphocholine. It catalyses the reaction a lipid IVA + a 1,2-diacyl-sn-glycero-3-phosphocholine = a lipid IVB + a 2-acyl-sn-glycero-3-phosphocholine. The enzyme catalyses a lipid IIA + a 1,2-diacyl-sn-glycero-3-phosphocholine = a lipid IIB + a 2-acyl-sn-glycero-3-phosphocholine. Transfers a fatty acid residue from the sn-1 position of a phospholipid to the N-linked hydroxyfatty acid chain on the proximal unit of lipid A or its precursors. The polypeptide is Lipid A acyltransferase PagP (Laribacter hongkongensis (strain HLHK9)).